Here is a 338-residue protein sequence, read N- to C-terminus: MKVFYDKDADLSLIKGKNVTIIGYGSQGHAHALNLKDSGVNVTVGLRKSGASWNKAVNAGLQVKEVAEAVKNADVVMILLPDEQIADVYKNEVHANIKEGAALAFAHGFNVHYGAVIPRADLDVIMIAPKAPGHTVRATYTQGGGVPHLIAVHQNKSGAARDIALSYATANGGGRAGIIETNFREETETDLFGEQAVLCGGTVELIKAGFETLVEAGYAPEMAYFECLHELKLIVDLIYEGGIANMNYSISNNAEYGEYVTGPRVVTEETKKAMKQCLKDIQTGEYAKSFLLENKAGAPTLISRRRLNAEHEIEVVGEKLRAMMPWIAKNKMVDQSKN.

Residues 1–181 enclose the KARI N-terminal Rossmann domain; it reads MKVFYDKDAD…GGGRAGIIET (181 aa). NADP(+) contacts are provided by residues 24–27, Arg-47, and Ser-52; that span reads YGSQ. His-107 is an active-site residue. NADP(+) is bound at residue Gly-133. The 146-residue stretch at 182–327 folds into the KARI C-terminal knotted domain; sequence NFREETETDL…EKLRAMMPWI (146 aa). 4 residues coordinate Mg(2+): Asp-190, Glu-194, Glu-226, and Glu-230. A substrate-binding site is contributed by Ser-251.

The protein belongs to the ketol-acid reductoisomerase family. Mg(2+) is required as a cofactor.

It catalyses the reaction (2R)-2,3-dihydroxy-3-methylbutanoate + NADP(+) = (2S)-2-acetolactate + NADPH + H(+). It carries out the reaction (2R,3R)-2,3-dihydroxy-3-methylpentanoate + NADP(+) = (S)-2-ethyl-2-hydroxy-3-oxobutanoate + NADPH + H(+). It participates in amino-acid biosynthesis; L-isoleucine biosynthesis; L-isoleucine from 2-oxobutanoate: step 2/4. Its pathway is amino-acid biosynthesis; L-valine biosynthesis; L-valine from pyruvate: step 2/4. Functionally, involved in the biosynthesis of branched-chain amino acids (BCAA). Catalyzes an alkyl-migration followed by a ketol-acid reduction of (S)-2-acetolactate (S2AL) to yield (R)-2,3-dihydroxy-isovalerate. In the isomerase reaction, S2AL is rearranged via a Mg-dependent methyl migration to produce 3-hydroxy-3-methyl-2-ketobutyrate (HMKB). In the reductase reaction, this 2-ketoacid undergoes a metal-dependent reduction by NADPH to yield (R)-2,3-dihydroxy-isovalerate. This chain is Ketol-acid reductoisomerase (NADP(+)), found in Cupriavidus taiwanensis (strain DSM 17343 / BCRC 17206 / CCUG 44338 / CIP 107171 / LMG 19424 / R1) (Ralstonia taiwanensis (strain LMG 19424)).